An 831-amino-acid chain; its full sequence is Translation initiation factor IF-2 (831 aa).

Over residues 1-11 (MADEIKKENAP) the composition is skewed to basic and acidic residues. Positions 1-236 (MADEIKKENA…GKHAKKASAL (236 aa)) are disordered. Positions 22 to 31 (TTVSGTSTTG) are enriched in low complexity. Composition is skewed to basic and acidic residues over residues 49–150 (DLER…RYAD) and 157–166 (DNGKLDDYSD). Residues 190 to 200 (RSKNKVVKAKK) show a composition bias toward basic residues. A compositionally biased stretch (basic and acidic residues) spans 201 to 225 (GGRDDENGNKNERQSDRRNQKDVKG). The tr-type G domain maps to 330-500 (HRAPVVTIMG…LLQSEVLELT (171 aa)). Residues 339–346 (GHVDHGKT) form a G1 region. Residue 339–346 (GHVDHGKT) participates in GTP binding. A G2 region spans residues 364 to 368 (GITQH). The interval 386–389 (DTPG) is G3. GTP contacts are provided by residues 386–390 (DTPGH) and 440–443 (NKID). A G4 region spans residues 440–443 (NKID). The G5 stretch occupies residues 476–478 (SAK).

It belongs to the TRAFAC class translation factor GTPase superfamily. Classic translation factor GTPase family. IF-2 subfamily.

It is found in the cytoplasm. In terms of biological role, one of the essential components for the initiation of protein synthesis. Protects formylmethionyl-tRNA from spontaneous hydrolysis and promotes its binding to the 30S ribosomal subunits. Also involved in the hydrolysis of GTP during the formation of the 70S ribosomal complex. The protein is Translation initiation factor IF-2 of Histophilus somni (strain 2336) (Haemophilus somnus).